The sequence spans 292 residues: 33 kDa chaperonin (292 aa).

2 disulfide bridges follow: Cys-230-Cys-232 and Cys-263-Cys-266.

Belongs to the HSP33 family. Post-translationally, under oxidizing conditions two disulfide bonds are formed involving the reactive cysteines. Under reducing conditions zinc is bound to the reactive cysteines and the protein is inactive.

The protein localises to the cytoplasm. Redox regulated molecular chaperone. Protects both thermally unfolding and oxidatively damaged proteins from irreversible aggregation. Plays an important role in the bacterial defense system toward oxidative stress. The polypeptide is 33 kDa chaperonin (Shigella dysenteriae serotype 1 (strain Sd197)).